An 867-amino-acid polypeptide reads, in one-letter code: Zinc finger protein zfp-1 (867 aa).

The PHD-type 1 zinc-finger motif lies at 5 to 57; the sequence is VGGCCVCADENGWTDNPLIYCDGENCEVAVHQGCYGIQEVPEGEWFCAKCTKA. The C2HC pre-PHD-type 2 zinc finger occupies 69 to 102; that stretch reads TFCCQLCPFDYGALKKTDRNGWAHVICALYIPEV. The extended PHD2 domain (ePHD2) stretch occupies residues 69 to 186; sequence TFCCQLCPFD…KYCGYCENHL (118 aa). The segment at 125-186 adopts a PHD-type 2 zinc-finger fold; the sequence is KLCYICNEER…KYCGYCENHL (62 aa). 4 disordered regions span residues 267–311, 440–477, 503–586, and 753–773; these read GSTV…SLSS, KNDM…GKSP, ADRT…QSNR, and SSGA…STAG. The segment covering 285 to 311 has biased composition (polar residues); the sequence is PLTTSSRSSVAQDPSPPLTINKNSLSS. The span at 503-512 shows a compositional bias: basic and acidic residues; sequence ADRTAAERRA. Positions 516 to 527 are enriched in polar residues; that stretch reads QSQPSTSTNGGP. The segment covering 538–550 has biased composition (low complexity); sequence HTNSTNSTNHQNN. Residues 551–573 show a composition bias toward polar residues; it reads GLTQNAPASTSMQAGTSSNDGVI. The span at 574–585 shows a compositional bias: low complexity; it reads SQNGTSSTSQSN. The segment covering 758-771 has biased composition (polar residues); that stretch reads VNSNIQNHRATPST.

As to quaternary structure, multimer; in vitro. Interacts (via C-terminus) with dot-1.1 to form a heterodimer known as the zfp-1-dot-1.1 complex or DotCom complex. Isoform a: Expressed at high levels in maturing oocytes, but at low levels in the rest of the germ line (at protein level). Isoform a: Not expressed in the pharynx, germ line and tail. Isoform c: Not expressed in the germ line (at protein level). Isoform c: Uniformly expressed.

It localises to the nucleus. The protein resides in the chromosome. Functionally, recruits the histone methyltransferase dot-1.1 to chromatin to methylate 'Lys-79' of histone H3 and activate transcription. Recognizes and binds histone H3 methylated at 'Lys-4' (H3K4me) at the promoters of target genes. During stress, the zfp-1-dot-1.1 complex also plays a role in the deubiquitination of histone H2B sites, which negatively modulates the RNA polymerase II-induced transcription of highly expressed genes. In response to stress, binds to the pdk-1 promoter to negatively regulate pdk-1 expression, which negatively modulates daf-16/FOXO-mediated gene expression. Thus, most likely via this mechanism, in response to stress, it confers a protective role against neuronal necrosis. Plays a role in Insulin/IGF-1-like signaling (IIS)- and diet restriction-mediated lifespan extension by controlling daf-16/FOXO and pha-4/FOXA recruitment to target promoters. May negatively regulate the expression of genes required for vulval development. May play a role in axon guidance in D-type motor neurons. May suppress sensitivity to RNAi. In terms of biological role, required for migration of HSN motor neurons during embryogenesis. This is Zinc finger protein zfp-1 from Caenorhabditis elegans.